Consider the following 270-residue polypeptide: 27 kDa core protein (270 aa).

This sequence belongs to the chordopoxvirinae D3 family.

The protein localises to the virion. Functionally, late protein which is part of a large complex required for early virion morphogenesis. This complex participates in the formation of virosomes and the incorporation of virosomal contents into nascent immature virions. The polypeptide is 27 kDa core protein (Vertebrata (FPV)).